A 162-amino-acid chain; its full sequence is ATP synthase subunit b (162 aa).

The helical transmembrane segment at 16–36 (GISGGTIIYQLLMFIILLALL) threads the bilayer.

Belongs to the ATPase B chain family. As to quaternary structure, F-type ATPases have 2 components, F(1) - the catalytic core - and F(0) - the membrane proton channel. F(1) has five subunits: alpha(3), beta(3), gamma(1), delta(1), epsilon(1). F(0) has three main subunits: a(1), b(2) and c(10-14). The alpha and beta chains form an alternating ring which encloses part of the gamma chain. F(1) is attached to F(0) by a central stalk formed by the gamma and epsilon chains, while a peripheral stalk is formed by the delta and b chains.

It is found in the cell membrane. F(1)F(0) ATP synthase produces ATP from ADP in the presence of a proton or sodium gradient. F-type ATPases consist of two structural domains, F(1) containing the extramembraneous catalytic core and F(0) containing the membrane proton channel, linked together by a central stalk and a peripheral stalk. During catalysis, ATP synthesis in the catalytic domain of F(1) is coupled via a rotary mechanism of the central stalk subunits to proton translocation. Its function is as follows. Component of the F(0) channel, it forms part of the peripheral stalk, linking F(1) to F(0). This Bacillus caldotenax protein is ATP synthase subunit b.